We begin with the raw amino-acid sequence, 100 residues long: Putative pterin-4-alpha-carbinolamine dehydratase (100 aa).

This sequence belongs to the pterin-4-alpha-carbinolamine dehydratase family.

The catalysed reaction is (4aS,6R)-4a-hydroxy-L-erythro-5,6,7,8-tetrahydrobiopterin = (6R)-L-erythro-6,7-dihydrobiopterin + H2O. The protein is Putative pterin-4-alpha-carbinolamine dehydratase of Rhodopseudomonas palustris (strain TIE-1).